The primary structure comprises 111 residues: Protein EARLY FLOWERING 4 (111 aa).

Residues 1-26 are disordered; the sequence is MKRNGETKRRRNVAEEAEQGEDPAMW. Position 45 is a phosphoserine (serine 45). Positions 90–111 are disordered; it reads FSSGFHGGKNGHDGGGAAGTRA. The span at 94–111 shows a compositional bias: gly residues; it reads FHGGKNGHDGGGAAGTRA.

Belongs to the EARLY FLOWERING 4 family. In terms of assembly, homodimer. Interacts with ELF3.

Its subcellular location is the nucleus. In terms of biological role, component of the central CCA1/LHY-TOC1 feedback loop in the circadian clock that promotes clock accuracy and is required for sustained rhythms in the absence of daily light/dark cycles. Part of a corepressor complex consisting of ELF4, ELF3, and LUX involved in the transcriptional regulation of APRR9. Increases ELF3 nuclear distribution and localization in nuclear bodies. Required for responsiveness to continuous red, by regulating phytochrome B (phyB) signaling (including during seedling de-etiolation) and gene expression. Mediates both entrainment to an environmental cycle and circadian rhythm sustainability under constant conditions. Controls flowering time. Necessary for light-induced expression of both CCA1 and LHY. The polypeptide is Protein EARLY FLOWERING 4 (ELF4) (Arabidopsis thaliana (Mouse-ear cress)).